The primary structure comprises 109 residues: Large ribosomal subunit protein uL24 (109 aa).

The protein belongs to the universal ribosomal protein uL24 family. Part of the 50S ribosomal subunit.

One of two assembly initiator proteins, it binds directly to the 5'-end of the 23S rRNA, where it nucleates assembly of the 50S subunit. Functionally, one of the proteins that surrounds the polypeptide exit tunnel on the outside of the subunit. The polypeptide is Large ribosomal subunit protein uL24 (Rickettsia bellii (strain RML369-C)).